The sequence spans 521 residues: Alkyl hydroperoxide reductase subunit F (521 aa).

213–228 (DVLVVGGGPAGAAAAI) contributes to the FAD binding site. A disulfide bridge links C344 with C347. 356 to 370 (RVAVIGGGNSGVEAA) is an NAD(+) binding site. 477-487 (TSLPGIFAAGD) is a binding site for FAD.

This sequence belongs to the class-II pyridine nucleotide-disulfide oxidoreductase family. As to quaternary structure, homodimer. FAD serves as cofactor.

In terms of biological role, serves to protect the cell against DNA damage by alkyl hydroperoxides. It can use either NADH or NADPH as electron donor for direct reduction of redox dyes or of alkyl hydroperoxides when combined with the AhpC protein. The sequence is that of Alkyl hydroperoxide reductase subunit F (ahpF) from Pseudomonas aeruginosa (strain ATCC 15692 / DSM 22644 / CIP 104116 / JCM 14847 / LMG 12228 / 1C / PRS 101 / PAO1).